Consider the following 293-residue polypeptide: Transcription initiation factor IIB 2 (293 aa).

Residues 1-31 (MKCPYCKTDNAITYDVEKGMYVCTNCASVIE) form a TFIIB-type zinc finger. 4 residues coordinate Zn(2+): Cys3, Cys6, Cys23, and Cys26. Repeat copies occupy residues 107 to 193 (SILN…ANSI) and 204 to 285 (EYIP…DIVD).

Belongs to the TFIIB family.

Functionally, stabilizes TBP binding to an archaeal box-A promoter. Also responsible for recruiting RNA polymerase II to the pre-initiation complex (DNA-TBP-TFIIB). The protein is Transcription initiation factor IIB 2 of Saccharolobus solfataricus (strain ATCC 35092 / DSM 1617 / JCM 11322 / P2) (Sulfolobus solfataricus).